The chain runs to 261 residues: Pyridoxine 5'-phosphate synthase (261 aa).

Residue Asn-6 participates in 3-amino-2-oxopropyl phosphate binding. 8–9 contributes to the 1-deoxy-D-xylulose 5-phosphate binding site; that stretch reads DH. Position 17 (Arg-17) interacts with 3-amino-2-oxopropyl phosphate. His-42 functions as the Proton acceptor in the catalytic mechanism. Arg-44 and His-49 together coordinate 1-deoxy-D-xylulose 5-phosphate. Glu-69 serves as the catalytic Proton acceptor. 1-deoxy-D-xylulose 5-phosphate is bound at residue Thr-99. His-213 functions as the Proton donor in the catalytic mechanism. Residues Gly-214 and 235–236 contribute to the 3-amino-2-oxopropyl phosphate site; that span reads GQ.

It belongs to the PNP synthase family. In terms of assembly, homooctamer; tetramer of dimers.

The protein localises to the cytoplasm. It catalyses the reaction 3-amino-2-oxopropyl phosphate + 1-deoxy-D-xylulose 5-phosphate = pyridoxine 5'-phosphate + phosphate + 2 H2O + H(+). It functions in the pathway cofactor biosynthesis; pyridoxine 5'-phosphate biosynthesis; pyridoxine 5'-phosphate from D-erythrose 4-phosphate: step 5/5. Catalyzes the complicated ring closure reaction between the two acyclic compounds 1-deoxy-D-xylulose-5-phosphate (DXP) and 3-amino-2-oxopropyl phosphate (1-amino-acetone-3-phosphate or AAP) to form pyridoxine 5'-phosphate (PNP) and inorganic phosphate. The protein is Pyridoxine 5'-phosphate synthase of Aliarcobacter butzleri (strain RM4018) (Arcobacter butzleri).